Reading from the N-terminus, the 134-residue chain is Phosphoribosyl-AMP cyclohydrolase (134 aa).

Residue aspartate 77 coordinates Mg(2+). Cysteine 78 lines the Zn(2+) pocket. 2 residues coordinate Mg(2+): aspartate 79 and aspartate 81. Positions 95 and 102 each coordinate Zn(2+).

The protein belongs to the PRA-CH family. Homodimer. The cofactor is Mg(2+). Requires Zn(2+) as cofactor.

It localises to the cytoplasm. The enzyme catalyses 1-(5-phospho-beta-D-ribosyl)-5'-AMP + H2O = 1-(5-phospho-beta-D-ribosyl)-5-[(5-phospho-beta-D-ribosylamino)methylideneamino]imidazole-4-carboxamide. It participates in amino-acid biosynthesis; L-histidine biosynthesis; L-histidine from 5-phospho-alpha-D-ribose 1-diphosphate: step 3/9. Its function is as follows. Catalyzes the hydrolysis of the adenine ring of phosphoribosyl-AMP. The sequence is that of Phosphoribosyl-AMP cyclohydrolase from Pseudomonas aeruginosa (strain UCBPP-PA14).